The chain runs to 78 residues: Small ribosomal subunit protein uS17 (78 aa).

Belongs to the universal ribosomal protein uS17 family. As to quaternary structure, part of the 30S ribosomal subunit.

Its function is as follows. One of the primary rRNA binding proteins, it binds specifically to the 5'-end of 16S ribosomal RNA. This is Small ribosomal subunit protein uS17 from Sinorhizobium medicae (strain WSM419) (Ensifer medicae).